The following is a 589-amino-acid chain: Aspartate--tRNA ligase (589 aa).

Residue Glu-174 coordinates L-aspartate. The interval 198–201 (QLFK) is aspartate. An L-aspartate-binding site is contributed by Arg-220. ATP-binding positions include 220–222 (RDE) and Gln-229. His-448 contacts L-aspartate. Glu-483 is an ATP binding site. Arg-490 lines the L-aspartate pocket. Residue 535-538 (GIDR) participates in ATP binding.

It belongs to the class-II aminoacyl-tRNA synthetase family. Type 1 subfamily. Homodimer.

Its subcellular location is the cytoplasm. It catalyses the reaction tRNA(Asp) + L-aspartate + ATP = L-aspartyl-tRNA(Asp) + AMP + diphosphate. Its function is as follows. Catalyzes the attachment of L-aspartate to tRNA(Asp) in a two-step reaction: L-aspartate is first activated by ATP to form Asp-AMP and then transferred to the acceptor end of tRNA(Asp). The chain is Aspartate--tRNA ligase from Xylella fastidiosa (strain M23).